The following is a 164-amino-acid chain: Phosphopantetheine adenylyltransferase (164 aa).

Ser-11 lines the substrate pocket. ATP is bound by residues 11–12 (SF) and His-19. The substrate site is built by Lys-43, Leu-75, and Arg-89. ATP contacts are provided by residues 90–92 (GLR), Glu-100, and 125–131 (YGYLSSS).

It belongs to the bacterial CoaD family. As to quaternary structure, homohexamer. The cofactor is Mg(2+).

The protein localises to the cytoplasm. The catalysed reaction is (R)-4'-phosphopantetheine + ATP + H(+) = 3'-dephospho-CoA + diphosphate. The protein operates within cofactor biosynthesis; coenzyme A biosynthesis; CoA from (R)-pantothenate: step 4/5. Reversibly transfers an adenylyl group from ATP to 4'-phosphopantetheine, yielding dephospho-CoA (dPCoA) and pyrophosphate. The protein is Phosphopantetheine adenylyltransferase of Geobacter sulfurreducens (strain ATCC 51573 / DSM 12127 / PCA).